A 191-amino-acid chain; its full sequence is Putative glutathione-dependent formaldehyde-activating enzyme (191 aa).

One can recognise a CENP-V/GFA domain in the interval 20-166; that stretch reads FPGGNLYCKC…FHSLGLETYD (147 aa). Residues Cys-27, Cys-29, Cys-48, Cys-50, Cys-53, Cys-95, and Cys-98 each contribute to the Zn(2+) site.

It belongs to the Gfa family. It depends on Zn(2+) as a cofactor.

The enzyme catalyses S-(hydroxymethyl)glutathione = glutathione + formaldehyde. The protein operates within one-carbon metabolism; formaldehyde degradation; formate from formaldehyde (glutathione route): step 1/3. Catalyzes the condensation of formaldehyde and glutathione to S-hydroxymethylglutathione. The chain is Putative glutathione-dependent formaldehyde-activating enzyme from Aspergillus niger (strain ATCC MYA-4892 / CBS 513.88 / FGSC A1513).